We begin with the raw amino-acid sequence, 118 residues long: Small ribosomal subunit protein uS13 (118 aa).

Residues 94-118 form a disordered region; the sequence is SLPLRGQRTKTNARTRKGPRKPIKK.

The protein belongs to the universal ribosomal protein uS13 family. Part of the 30S ribosomal subunit. Forms a loose heterodimer with protein S19. Forms two bridges to the 50S subunit in the 70S ribosome.

In terms of biological role, located at the top of the head of the 30S subunit, it contacts several helices of the 16S rRNA. In the 70S ribosome it contacts the 23S rRNA (bridge B1a) and protein L5 of the 50S subunit (bridge B1b), connecting the 2 subunits; these bridges are implicated in subunit movement. Contacts the tRNAs in the A and P-sites. The sequence is that of Small ribosomal subunit protein uS13 from Alteromonas mediterranea (strain DSM 17117 / CIP 110805 / LMG 28347 / Deep ecotype).